A 705-amino-acid polypeptide reads, in one-letter code: Ribosomal RNA large subunit methyltransferase K/L (705 aa).

The region spanning 43 to 154 (VVYRCCLWSR…GEKGILGFDL (112 aa)) is the THUMP domain.

This sequence belongs to the methyltransferase superfamily. RlmKL family.

The protein localises to the cytoplasm. The catalysed reaction is guanosine(2445) in 23S rRNA + S-adenosyl-L-methionine = N(2)-methylguanosine(2445) in 23S rRNA + S-adenosyl-L-homocysteine + H(+). The enzyme catalyses guanosine(2069) in 23S rRNA + S-adenosyl-L-methionine = N(2)-methylguanosine(2069) in 23S rRNA + S-adenosyl-L-homocysteine + H(+). Specifically methylates the guanine in position 2445 (m2G2445) and the guanine in position 2069 (m7G2069) of 23S rRNA. This Aliivibrio salmonicida (strain LFI1238) (Vibrio salmonicida (strain LFI1238)) protein is Ribosomal RNA large subunit methyltransferase K/L.